The following is an 84-amino-acid chain: Kunitz-type neurotoxin MitTx-alpha (84 aa).

The N-terminal stretch at M1–S24 is a signal peptide. A Pyrrolidone carboxylic acid modification is found at Q25. Residues C31–C82 form the BPTI/Kunitz inhibitor domain. Cystine bridges form between C31–C82, C41–C65, and C57–C78.

The protein belongs to the venom Kunitz-type family. Heterodimer of an alpha (Kunitz-type) and a beta (phospholipase A2 homolog) chains; non-covalently-linked. In terms of tissue distribution, expressed by the venom gland.

The protein localises to the secreted. Functionally, mitTx, a heteromeric complex between Kunitz- and phospholipase-A2-like proteins, potently, persistently and selectively activates rat and chicken acid-sensing ion channel ASIC1. Both alternatively spliced rat isoforms ASIC1a and ASIC1b are activated, with a higher potency for ASIC1a (EC(50)=9.4 nM) vs ASIC1b (EC(50)=23 nM). The rat ASIC3 subtype is also sensitive to the heterodimer, but with a lower potency (EC(50)=830 nM). On rat ASIC2a, the toxin shows a very weak activation, but produces a remarkable potentiation (&gt;100-fold) of protons when the extracellular pH drops below neutrality. Moderate and weak activations are also observed on the heterotrimers Asic1a-Asic2a and Asic1a-Asic3 (expressed in CHO cells), respectively. The binding sites of the beta subunit of MitTx and the spider psalmotoxin-1 overlap, explaining why these toxins are mutually exclusive. In vivo, the heterodimer elicits robust pain-related behavior in mice by activation of ASIC1 channels on capsaicin-sensitive nerve fibers. This is Kunitz-type neurotoxin MitTx-alpha from Micrurus tener tener (Texas coral snake).